The sequence spans 351 residues: Probable dual-specificity RNA methyltransferase RlmN (351 aa).

Catalysis depends on glutamate 92, which acts as the Proton acceptor. A Radical SAM core domain is found at 98–332 (TDQRLTVCIS…VSLRASRGLD (235 aa)). Cysteine 105 and cysteine 337 are joined by a disulfide. Cysteine 112, cysteine 116, and cysteine 119 together coordinate [4Fe-4S] cluster. S-adenosyl-L-methionine contacts are provided by residues 159 to 160 (GE), serine 189, 218 to 220 (SLH), and asparagine 294. The S-methylcysteine intermediate role is filled by cysteine 337.

Belongs to the radical SAM superfamily. RlmN family. Requires [4Fe-4S] cluster as cofactor.

The protein localises to the cytoplasm. It carries out the reaction adenosine(2503) in 23S rRNA + 2 reduced [2Fe-2S]-[ferredoxin] + 2 S-adenosyl-L-methionine = 2-methyladenosine(2503) in 23S rRNA + 5'-deoxyadenosine + L-methionine + 2 oxidized [2Fe-2S]-[ferredoxin] + S-adenosyl-L-homocysteine. The enzyme catalyses adenosine(37) in tRNA + 2 reduced [2Fe-2S]-[ferredoxin] + 2 S-adenosyl-L-methionine = 2-methyladenosine(37) in tRNA + 5'-deoxyadenosine + L-methionine + 2 oxidized [2Fe-2S]-[ferredoxin] + S-adenosyl-L-homocysteine. In terms of biological role, specifically methylates position 2 of adenine 2503 in 23S rRNA and position 2 of adenine 37 in tRNAs. The chain is Probable dual-specificity RNA methyltransferase RlmN from Synechococcus sp. (strain CC9902).